A 974-amino-acid chain; its full sequence is Toxin subunit YenC1 (974 aa).

RHS repeat units lie at residues 165–179, 290–304, 322–336, 354–368, 398–412, 490–504, 570–584, 596–610, and 630–644; these read AGQCLRHYNSAGLNQ, GVLTTYSYEAETQRL, FQDLRYTYDPVGNVL, VPENTYIYDTLYQLV, NYIRNYHYDSAGNLM, SDSETYRYDANSQRV, NDELRYSYDNLIGSS, SQEEYYPYGGTAVWM, and DATGLYYYGFRYYQP. Residues 600 to 680 are RHS-repeat associated core domain; it reads YYPYGGTAVW…PIVLHDPDGL (81 aa). Residues 699–940 form a cytotoxic necrotising factor domain region; the sequence is ISSLKGTGPF…GEVSASTLLE (242 aa).

Belongs to the RHS family. In terms of assembly, semipurified toxin complex consists of at least YenA1-YenA2-YenB-YenC1-YenC2-Chi1-Chi2. The Yen-TC:K9 subcomplex is about 26 nm tall and 22 nm in diameter with 5-fold symmetry and 5 copies of YenA1, YenA2, Chi1 and Chi2; the chitinase subunits may be solvent accessible on the exterior the complex. The Yen-TC:K9 subcomplex has no insecticidal activity. The native complex with additional YenB, YenC1 and YenC2 subunits is 16 nm taller and is insecticidal; the toxicity-conferring subunits are present at about 1 copy each.

It is found in the secreted. Its activity is regulated as follows. Toxin complex is secreted when grown at 25 degrees Celsius or less; at higher temperatures the proteins are present intracellularly but not secreted. Functionally, part of an orally active toxin complex (TC) with strong insecticidal effects on larvae of the Coleoptera Costelytra zealandica, Acrossidius tasmania and Adoryphorus couloni and some Lepidoptera larvae. The TC has an endochitinase activity. The sequence is that of Toxin subunit YenC1 from Yersinia entomophaga.